Reading from the N-terminus, the 225-residue chain is 7-cyano-7-deazaguanine synthase (225 aa).

9–19 is a binding site for ATP; the sequence is LSGGLDSATCL. Positions 189, 199, 202, and 205 each coordinate Zn(2+).

This sequence belongs to the QueC family. The cofactor is Zn(2+).

It catalyses the reaction 7-carboxy-7-deazaguanine + NH4(+) + ATP = 7-cyano-7-deazaguanine + ADP + phosphate + H2O + H(+). It functions in the pathway purine metabolism; 7-cyano-7-deazaguanine biosynthesis. Its function is as follows. Catalyzes the ATP-dependent conversion of 7-carboxy-7-deazaguanine (CDG) to 7-cyano-7-deazaguanine (preQ(0)). The polypeptide is 7-cyano-7-deazaguanine synthase (Dechloromonas aromatica (strain RCB)).